Here is a 239-residue protein sequence, read N- to C-terminus: Ribonuclease PH (239 aa).

Phosphate contacts are provided by residues Arg86 and 124-126 (GTR).

Belongs to the RNase PH family. In terms of assembly, homohexameric ring arranged as a trimer of dimers.

The catalysed reaction is tRNA(n+1) + phosphate = tRNA(n) + a ribonucleoside 5'-diphosphate. In terms of biological role, phosphorolytic 3'-5' exoribonuclease that plays an important role in tRNA 3'-end maturation. Removes nucleotide residues following the 3'-CCA terminus of tRNAs; can also add nucleotides to the ends of RNA molecules by using nucleoside diphosphates as substrates, but this may not be physiologically important. Probably plays a role in initiation of 16S rRNA degradation (leading to ribosome degradation) during starvation. The chain is Ribonuclease PH from Rickettsia bellii (strain RML369-C).